The chain runs to 52 residues: UPF0181 protein VPA0916 (52 aa).

This sequence belongs to the UPF0181 family.

This chain is UPF0181 protein VPA0916, found in Vibrio parahaemolyticus serotype O3:K6 (strain RIMD 2210633).